A 436-amino-acid chain; its full sequence is MSNSITKNLSKHKLVKDTLVLILAGGRGSRLHELTDKRAKPALYFGGNRRIIDFALSNCINSGLNRIGVVTQYAAHSLLRHLQKGWSFLPQERGEFIDMLPARQQIDDSTWYRGTADAVYQNMAIIRDHYRPKYILILAGDHIYKQDYSQMLLDHVSSNAKCTVGCIEVPREQASEFGVMAVDENLKVKAFVEKPKDPPAIPNKPDTSLASMGIYVFDADYLYDVLMREVNTPYTSHDFGKDILPKSLEEEVLYAHPFSRSCMGRNTDGEIYWRDVGTLDSFWQSNIDLVSEHPQLDIYDQRWPIRGNPTQTYPSKFFYNKQDIKPVDNSLISGGCVITDAEISYSVLFDQVKVKADSKVEYSVVLPQVTIGKNCILRNCIIDRQVVIPDNTVIGVNIEEDRKRFRVSSTGKVILVTESMMKKLNGEKVVSEIHLD.

Alpha-D-glucose 1-phosphate-binding positions include Tyr-112, Gly-178, 193 to 194, and Ser-211; that span reads EK.

Belongs to the bacterial/plant glucose-1-phosphate adenylyltransferase family. As to quaternary structure, homotetramer.

The catalysed reaction is alpha-D-glucose 1-phosphate + ATP + H(+) = ADP-alpha-D-glucose + diphosphate. Its pathway is glycan biosynthesis; glycogen biosynthesis. Functionally, involved in the biosynthesis of ADP-glucose, a building block required for the elongation reactions to produce glycogen. Catalyzes the reaction between ATP and alpha-D-glucose 1-phosphate (G1P) to produce pyrophosphate and ADP-Glc. The chain is Glucose-1-phosphate adenylyltransferase from Histophilus somni (strain 129Pt) (Haemophilus somnus).